A 353-amino-acid polypeptide reads, in one-letter code: 3-dehydroquinate synthase (353 aa).

NAD(+) contacts are provided by residues 62–67, 96–100, 120–121, Lys133, and Lys142; these read DGEQYK, GVIGD, and TT. Glu175, His236, and His253 together coordinate Zn(2+).

This sequence belongs to the sugar phosphate cyclases superfamily. Dehydroquinate synthase family. NAD(+) is required as a cofactor. Requires Co(2+) as cofactor. Zn(2+) serves as cofactor.

The protein localises to the cytoplasm. It catalyses the reaction 7-phospho-2-dehydro-3-deoxy-D-arabino-heptonate = 3-dehydroquinate + phosphate. The protein operates within metabolic intermediate biosynthesis; chorismate biosynthesis; chorismate from D-erythrose 4-phosphate and phosphoenolpyruvate: step 2/7. Its function is as follows. Catalyzes the conversion of 3-deoxy-D-arabino-heptulosonate 7-phosphate (DAHP) to dehydroquinate (DHQ). The protein is 3-dehydroquinate synthase of Helicobacter hepaticus (strain ATCC 51449 / 3B1).